The sequence spans 420 residues: Sodium/proton antiporter 2 (420 aa).

A run of 11 helical transmembrane segments spans residues 25–45 (IALL…SVEI), 60–80 (IVFY…HQGF), 94–114 (ILLW…DNLT), 136–156 (LGAV…IGDV), 173–193 (IKNL…LMSL), 221–241 (LVFG…SLTG), 242–262 (LPPY…TDVI), 285–305 (GALF…AGIL), 321–341 (LIAS…LVAA), 363–383 (FCAG…VIFM), and 400–420 (FAFA…NFPL).

The protein belongs to the NhaD Na(+)/H(+) (TC 2.A.62) antiporter family.

It localises to the membrane. Its function is as follows. Na(+)/H(+) antiporter that extrudes sodium in exchange for external protons. The sequence is that of Sodium/proton antiporter 2 from Arabidopsis thaliana (Mouse-ear cress).